The following is a 437-amino-acid chain: GTPase Obg (437 aa).

An Obg domain is found at Ser-2–Leu-160. In terms of domain architecture, OBG-type G spans Ala-161–Ala-338. Residues Gly-167 to Ser-174, Phe-192 to Val-196, Asp-214 to Gly-217, Asn-284 to Asp-287, and Ser-319 to Leu-321 each bind GTP. Mg(2+) is bound by residues Ser-174 and Thr-194. Residues Gly-359 to Asp-437 enclose the OCT domain.

This sequence belongs to the TRAFAC class OBG-HflX-like GTPase superfamily. OBG GTPase family. Monomer. Mg(2+) serves as cofactor.

It localises to the cytoplasm. Functionally, an essential GTPase which binds GTP, GDP and possibly (p)ppGpp with moderate affinity, with high nucleotide exchange rates and a fairly low GTP hydrolysis rate. Plays a role in control of the cell cycle, stress response, ribosome biogenesis and in those bacteria that undergo differentiation, in morphogenesis control. The protein is GTPase Obg of Streptococcus pyogenes serotype M2 (strain MGAS10270).